Reading from the N-terminus, the 738-residue chain is Sporulation kinase E (738 aa).

4 consecutive PAS domains span residues 29-99 (ELNQ…FKKG), 150-220 (NEQL…NRKG), 271-342 (SEER…YGEI), and 391-462 (SELK…FDEM). Residues 523–729 (GIAHEIRNPM…VFHITLPVRQ (207 aa)) enclose the Histidine kinase domain. Position 526 is a phosphohistidine; by autocatalysis (H526).

It catalyses the reaction ATP + protein L-histidine = ADP + protein N-phospho-L-histidine.. Its function is as follows. Phosphorylates the sporulation-regulatory protein spo0A under biofilm growth conditions. Also able to weakly phosphorylate spo0F. This is Sporulation kinase E (kinE) from Bacillus subtilis (strain 168).